A 335-amino-acid polypeptide reads, in one-letter code: NADH-ubiquinone oxidoreductase chain 2 (335 aa).

Transmembrane regions (helical) follow at residues proline 7–alanine 27, asparagine 28–methionine 48, glycine 58–threonine 78, tryptophan 81–leucine 101, phenylalanine 110–tryptophan 130, asparagine 147–methionine 167, threonine 174–tyrosine 194, isoleucine 200–leucine 220, methionine 240–proline 260, isoleucine 274–isoleucine 294, and serine 315–leucine 335.

It belongs to the complex I subunit 2 family.

Its subcellular location is the mitochondrion inner membrane. The enzyme catalyses a ubiquinone + NADH + 5 H(+)(in) = a ubiquinol + NAD(+) + 4 H(+)(out). Functionally, core subunit of the mitochondrial membrane respiratory chain NADH dehydrogenase (Complex I) that is believed to belong to the minimal assembly required for catalysis. Complex I functions in the transfer of electrons from NADH to the respiratory chain. The immediate electron acceptor for the enzyme is believed to be ubiquinone. The chain is NADH-ubiquinone oxidoreductase chain 2 (ND2) from Lumbricus terrestris (Common earthworm).